The sequence spans 326 residues: N-acetyl-gamma-glutamyl-phosphate reductase (326 aa).

Cys155 is a catalytic residue.

Belongs to the NAGSA dehydrogenase family. Type 1 subfamily.

It is found in the cytoplasm. It catalyses the reaction N-acetyl-L-glutamate 5-semialdehyde + phosphate + NADP(+) = N-acetyl-L-glutamyl 5-phosphate + NADPH + H(+). It functions in the pathway amino-acid biosynthesis; L-arginine biosynthesis; N(2)-acetyl-L-ornithine from L-glutamate: step 3/4. Catalyzes the NADPH-dependent reduction of N-acetyl-5-glutamyl phosphate to yield N-acetyl-L-glutamate 5-semialdehyde. This chain is N-acetyl-gamma-glutamyl-phosphate reductase, found in Shewanella loihica (strain ATCC BAA-1088 / PV-4).